Consider the following 361-residue polypeptide: Phosphoserine aminotransferase (361 aa).

S9 and R42 together coordinate L-glutamate. Residues 76 to 77 (AR), W102, T153, D173, and Q196 each bind pyridoxal 5'-phosphate. At K197 the chain carries N6-(pyridoxal phosphate)lysine. 238 to 239 (NT) lines the pyridoxal 5'-phosphate pocket.

Belongs to the class-V pyridoxal-phosphate-dependent aminotransferase family. SerC subfamily. As to quaternary structure, homodimer. Pyridoxal 5'-phosphate is required as a cofactor.

The protein resides in the cytoplasm. The catalysed reaction is O-phospho-L-serine + 2-oxoglutarate = 3-phosphooxypyruvate + L-glutamate. It catalyses the reaction 4-(phosphooxy)-L-threonine + 2-oxoglutarate = (R)-3-hydroxy-2-oxo-4-phosphooxybutanoate + L-glutamate. It participates in amino-acid biosynthesis; L-serine biosynthesis; L-serine from 3-phospho-D-glycerate: step 2/3. It functions in the pathway cofactor biosynthesis; pyridoxine 5'-phosphate biosynthesis; pyridoxine 5'-phosphate from D-erythrose 4-phosphate: step 3/5. Catalyzes the reversible conversion of 3-phosphohydroxypyruvate to phosphoserine and of 3-hydroxy-2-oxo-4-phosphonooxybutanoate to phosphohydroxythreonine. This Erwinia tasmaniensis (strain DSM 17950 / CFBP 7177 / CIP 109463 / NCPPB 4357 / Et1/99) protein is Phosphoserine aminotransferase.